The sequence spans 413 residues: Alpha-ketoglutarate-dependent xanthine dioxygenase xan1 (413 aa).

Low complexity predominate over residues 1–18 (MSATATTTVVEPPTTTLT). The tract at residues 1–24 (MSATATTTVVEPPTTTLTGATEPP) is disordered. Fe cation-binding residues include H183 and D185. Residues T228 and W362 each contribute to the 2-oxoglutarate site. H377 provides a ligand contact to Fe cation. A 2-oxoglutarate-binding site is contributed by R389.

It belongs to the TfdA dioxygenase family. Requires Fe(2+) as cofactor.

It localises to the cytoplasm. Its subcellular location is the cytosol. It carries out the reaction xanthine + 2-oxoglutarate + O2 = urate + succinate + CO2. In terms of biological role, alpha-ketoglutarate-dependent xanthine dioxygenase is a non-heme mononuclear Fe(2+) enzyme that decarboxylates alpha-ketoglutarate to succinate and CO(2) while hydroxylating xanthine to generate uric acid. Allows xanthine utilization as a nitrogen source. The chain is Alpha-ketoglutarate-dependent xanthine dioxygenase xan1 (xan1) from Schizosaccharomyces pombe (strain 972 / ATCC 24843) (Fission yeast).